A 3416-amino-acid polypeptide reads, in one-letter code: Genome polyprotein (3416 aa).

The segment at M1–P34 is disordered. At M1 to T99 the chain is on the cytoplasmic side. Residues R97–S117 constitute a propeptide, ER anchor for the capsid protein C, removed in mature form by serine protease NS3. A helical membrane pass occupies residues T100–V120. Residues R121–W243 are Extracellular-facing. N145 is a glycosylation site (N-linked (GlcNAc...) asparagine; by host). A helical membrane pass occupies residues K244–D261. Position 262 (S262) is a topological domain, cytoplasmic. A helical membrane pass occupies residues L263–A281. Topologically, residues T282–T728 are extracellular. 6 disulfides stabilise this stretch: C284-C311, C341-C397, C341-C402, C355-C386, C373-C397, and C373-C402. Residues D379–G392 are fusion peptide. N435 carries an N-linked (GlcNAc...) asparagine; by host glycan. 2 disulfides stabilise this stretch: C467–C571 and C588–C619. The helical transmembrane segment at I729 to G749 threads the bilayer. Residues L750 to T756 are Cytoplasmic-facing. Residues L757–A777 traverse the membrane as a helical segment. Residues D778–A1134 lie on the Extracellular side of the membrane. Intrachain disulfides connect C781/C792, C832/C922, C957/C1002, C1059/C1108, C1070/C1092, and C1091/C1095. 3 N-linked (GlcNAc...) asparagine; by host glycosylation sites follow: N862, N985, and N1001. Residues M1135–I1155 form a helical membrane-spanning segment. The Lumenal segment spans residues R1156 to S1164. Residues V1165–G1185 traverse the membrane as a helical segment. Residues L1186 to Y1189 lie on the Cytoplasmic side of the membrane. The chain crosses the membrane as a helical span at residues V1190–L1210. The Lumenal segment spans residues L1211–E1235. The helical transmembrane segment at A1236–S1256 threads the bilayer. At N1257–D1295 the chain is on the cytoplasmic side. Residues M1296–W1316 form a helical membrane-spanning segment. At S1317–S1361 the chain is on the lumenal side. The chain crosses the membrane as a helical span at residues F1362 to M1379. Residues V1380–S1384 lie on the Cytoplasmic side of the membrane. Residues Q1385 to T1405 traverse the membrane as a helical segment. Over R1406–A1456 the chain is Lumenal. The segment at A1412 to E1451 is interacts with and activates NS3 protease. Positions L1457–L1477 form an intramembrane region, helical. Residues A1478–A2162 are Lumenal-facing. The 180-residue stretch at S1492–P1671 folds into the Peptidase S7 domain. Catalysis depends on charge relay system; for serine protease NS3 activity residues H1545, D1569, and S1629. A Helicase ATP-binding domain is found at T1677–E1833. M1690–T1697 contributes to the ATP binding site. Positions D1781 to H1784 match the DEAH box motif. Positions G1844–Y2002 constitute a Helicase C-terminal domain. K1885 bears the N6-acetyllysine; by host mark. Residues F2163–F2183 form a helical membrane-spanning segment. Topologically, residues V2184–R2191 are cytoplasmic. The helical intramembrane region spans M2192–V2211. D2212 is a topological domain (lumenal). Residues Y2213 to E2233 traverse the membrane as a helical segment. Residues P2234–A2246 are Cytoplasmic-facing. Residues Y2247–L2267 form a helical membrane-spanning segment. The Lumenal segment spans residues D2268–S2301. The helical intramembrane region spans W2302–T2322. Topologically, residues K2323–G2345 are lumenal. The helical intramembrane region spans T2346–A2366. Topologically, residues T2367–P2368 are lumenal. The chain crosses the membrane as a helical span at residues M2369–L2389. The Cytoplasmic segment spans residues E2390–R2432. The chain crosses the membrane as a helical span at residues M2433–A2453. Residues S2454–T2476 are Lumenal-facing. The chain crosses the membrane as a helical span at residues L2477–L2497. Topologically, residues L2498 to I3416 are cytoplasmic. Residues G2514 to C2778 form the mRNA cap 0-1 NS5-type MT domain. S2569 contacts S-adenosyl-L-methionine. S2569 carries the phosphoserine modification. Catalysis depends on K2574, which acts as the For 2'-O-MTase activity. S-adenosyl-L-methionine is bound by residues G2599, W2600, T2617, I2618, D2644, and V2645. D2659 (for 2'-O-MTase activity) is an active-site residue. I2660 is an S-adenosyl-L-methionine binding site. Residues K2696 and E2732 each act as for 2'-O-MTase activity in the active site. The interaction with host SCRIB stretch occupies residues E2732–S2736. Y2734 contacts S-adenosyl-L-methionine. 4 residues coordinate Zn(2+): E2952, H2956, C2961, and C2964. Residues G3042 to A3191 enclose the RdRp catalytic domain. Zn(2+) is bound by residues H3226, C3242, and C3361.

It in the N-terminal section; belongs to the class I-like SAM-binding methyltransferase superfamily. mRNA cap 0-1 NS5-type methyltransferase family. In terms of assembly, homodimer. Interacts (via N-terminus) with host EXOC1 (via C-terminus); this interaction results in EXOC1 degradation through the proteasome degradation pathway. Forms heterodimers with envelope protein E in the endoplasmic reticulum and Golgi. As to quaternary structure, homodimer; in the endoplasmic reticulum and Golgi. Interacts with protein prM. Interacts with non-structural protein 1. In terms of assembly, homodimer; Homohexamer when secreted. Interacts with envelope protein E. NS1 interacts with NS4B. Interacts with host complement protein CFH; this interaction leads to the degradation of C3. Interacts (via N-terminus) with serine protease NS3. As to quaternary structure, forms a heterodimer with serine protease NS3. May form homooligomers. In terms of assembly, forms a heterodimer with NS2B. Interacts with non-structural protein 2A (via N-terminus). Interacts with NS4B. Interacts with unphosphorylated RNA-directed RNA polymerase NS5; this interaction stimulates RNA-directed RNA polymerase NS5 guanylyltransferase activity. Interacts with serine protease NS3. As to quaternary structure, homodimer. Interacts with host STAT2; this interaction inhibits the phosphorylation of the latter, and, when all viral proteins are present (polyprotein), targets STAT2 for degradation. Interacts with serine protease NS3. Post-translationally, specific enzymatic cleavages in vivo yield mature proteins. Cleavages in the lumen of endoplasmic reticulum are performed by host signal peptidase, whereas cleavages in the cytoplasmic side are performed by serine protease NS3. Signal cleavage at the 2K-4B site requires a prior NS3 protease-mediated cleavage at the 4A-2K site. In terms of processing, cleaved in post-Golgi vesicles by a host furin, releasing the mature small envelope protein M, and peptide pr. This cleavage is incomplete as up to 30% of viral particles still carry uncleaved prM. N-glycosylated. Post-translationally, N-glycosylated. The excreted form is glycosylated and this is required for efficient secretion of the protein from infected cells. In terms of processing, acetylated by host KAT5. Acetylation modulates NS3 RNA-binding and unwinding activities and plays an important positive role for viral replication. Phosphorylated on serines residues. This phosphorylation may trigger NS5 nuclear localization.

Its subcellular location is the virion. The protein resides in the host nucleus. It is found in the host cytoplasm. It localises to the host perinuclear region. The protein localises to the secreted. Its subcellular location is the virion membrane. The protein resides in the host endoplasmic reticulum membrane. It carries out the reaction Selective hydrolysis of -Xaa-Xaa-|-Yaa- bonds in which each of the Xaa can be either Arg or Lys and Yaa can be either Ser or Ala.. The enzyme catalyses RNA(n) + a ribonucleoside 5'-triphosphate = RNA(n+1) + diphosphate. The catalysed reaction is a ribonucleoside 5'-triphosphate + H2O = a ribonucleoside 5'-diphosphate + phosphate + H(+). It catalyses the reaction ATP + H2O = ADP + phosphate + H(+). It carries out the reaction a 5'-end (5'-triphosphoguanosine)-ribonucleoside in mRNA + S-adenosyl-L-methionine = a 5'-end (N(7)-methyl 5'-triphosphoguanosine)-ribonucleoside in mRNA + S-adenosyl-L-homocysteine. The enzyme catalyses a 5'-end (N(7)-methyl 5'-triphosphoguanosine)-ribonucleoside in mRNA + S-adenosyl-L-methionine = a 5'-end (N(7)-methyl 5'-triphosphoguanosine)-(2'-O-methyl-ribonucleoside) in mRNA + S-adenosyl-L-homocysteine + H(+). Plays a role in virus budding by binding to the cell membrane and gathering the viral RNA into a nucleocapsid that forms the core of a mature virus particle. During virus entry, may induce genome penetration into the host cytoplasm after hemifusion induced by the surface proteins. Can migrate to the cell nucleus where it modulates host functions. Functionally, inhibits RNA silencing by interfering with host Dicer. In terms of biological role, prevents premature fusion activity of envelope proteins in trans-Golgi by binding to envelope protein E at pH6.0. After virion release in extracellular space, gets dissociated from E dimers. Its function is as follows. Acts as a chaperone for envelope protein E during intracellular virion assembly by masking and inactivating envelope protein E fusion peptide. prM is the only viral peptide matured by host furin in the trans-Golgi network probably to avoid catastrophic activation of the viral fusion activity in acidic Golgi compartment prior to virion release. prM-E cleavage is inefficient, and many virions are only partially matured. These uncleaved prM would play a role in immune evasion. May play a role in virus budding. Exerts cytotoxic effects by activating a mitochondrial apoptotic pathway through M ectodomain. May display a viroporin activity. Functionally, binds to host cell surface receptor and mediates fusion between viral and cellular membranes. Envelope protein is synthesized in the endoplasmic reticulum in the form of heterodimer with protein prM. They play a role in virion budding in the ER, and the newly formed immature particle is covered with 60 spikes composed of heterodimer between precursor prM and envelope protein E. The virion is transported to the Golgi apparatus where the low pH causes dissociation of PrM-E heterodimers and formation of E homodimers. prM-E cleavage is inefficient, and many virions are only partially matured. These uncleaved prM would play a role in immune evasion. In terms of biological role, involved in immune evasion, pathogenesis and viral replication. Once cleaved off the polyprotein, is targeted to three destinations: the viral replication cycle, the plasma membrane and the extracellular compartment. Essential for viral replication. Required for formation of the replication complex and recruitment of other non-structural proteins to the ER-derived membrane structures. Excreted as a hexameric lipoparticle that plays a role against host immune response. Antagonizing the complement function. Binds to the host macrophages and dendritic cells. Inhibits signal transduction originating from Toll-like receptor 3 (TLR3). Its function is as follows. Component of the viral RNA replication complex that functions in virion assembly and antagonizes the host immune response. Required cofactor for the serine protease function of NS3. May have membrane-destabilizing activity and form viroporins. Functionally, displays three enzymatic activities: serine protease, NTPase and RNA helicase. NS3 serine protease, in association with NS2B, performs its autocleavage and cleaves the polyprotein at dibasic sites in the cytoplasm: C-prM, NS2A-NS2B, NS2B-NS3, NS3-NS4A, NS4A-2K and NS4B-NS5. NS3 RNA helicase binds RNA and unwinds dsRNA in the 3' to 5' direction. In terms of biological role, regulates the ATPase activity of the NS3 helicase activity. NS4A allows NS3 helicase to conserve energy during unwinding. Its function is as follows. Functions as a signal peptide for NS4B and is required for the interferon antagonism activity of the latter. Induces the formation of ER-derived membrane vesicles where the viral replication takes place. Inhibits interferon (IFN)-induced host STAT1 phosphorylation and nuclear translocation, thereby preventing the establishment of cellular antiviral state by blocking the IFN-alpha/beta pathway. Inhibits STAT2 translocation in the nucleus after IFN-alpha treatment. Functionally, replicates the viral (+) and (-) RNA genome, and performs the capping of genomes in the cytoplasm. NS5 methylates viral RNA cap at guanine N-7 and ribose 2'-O positions. Besides its role in RNA genome replication, also prevents the establishment of cellular antiviral state by blocking the interferon-alpha/beta (IFN-alpha/beta) signaling pathway. Inhibits host TYK2 and STAT2 phosphorylation, thereby preventing activation of JAK-STAT signaling pathway. This is Genome polyprotein from Homo sapiens (Human).